A 241-amino-acid polypeptide reads, in one-letter code: Carboxy-S-adenosyl-L-methionine synthase (241 aa).

S-adenosyl-L-methionine is bound by residues tyrosine 38, 63 to 65, 88 to 89, 116 to 117, asparagine 131, and arginine 198; these read GCS, DN, and DI.

It belongs to the class I-like SAM-binding methyltransferase superfamily. Cx-SAM synthase family. Homodimer.

It catalyses the reaction prephenate + S-adenosyl-L-methionine = carboxy-S-adenosyl-L-methionine + 3-phenylpyruvate + H2O. Functionally, catalyzes the conversion of S-adenosyl-L-methionine (SAM) to carboxy-S-adenosyl-L-methionine (Cx-SAM). This chain is Carboxy-S-adenosyl-L-methionine synthase, found in Mannheimia succiniciproducens (strain KCTC 0769BP / MBEL55E).